The primary structure comprises 497 residues: COP9 signalosome complex subunit 3 (497 aa).

One can recognise a PCI domain in the interval 233–408; the sequence is QAFDAFERCV…DGSPAYLTFL (176 aa).

It belongs to the CSN3 family. In terms of assembly, component of the COP9 signalosome (CSN) complex.

The protein localises to the cytoplasm. It localises to the nucleus. Functionally, component of the COP9 signalosome (CSN) complex that acts as an regulator of the ubiquitin (Ubl) conjugation pathway by mediating the deneddylation of the cullin subunit of SCF-type E3 ubiquitin-protein ligase complexes. The CSN complex is involved in the regulation of the circadian clock through its control of the stability of the SCF(FWD1) complex. This Neurospora crassa (strain ATCC 24698 / 74-OR23-1A / CBS 708.71 / DSM 1257 / FGSC 987) protein is COP9 signalosome complex subunit 3 (csn-3).